The sequence spans 590 residues: Zinc finger protein 703 (590 aa).

Over residues 1 to 14 (MSDSPAGSNPRTPE) the composition is skewed to polar residues. 3 disordered regions span residues 1–43 (MSDS…DPLR), 96–293 (CSQI…AGHV), and 341–366 (LVGG…LTGA). Ser2 is subject to N-acetylserine. Low complexity-rich tracts occupy residues 27-37 (PAVPAAVSLLP), 128-139 (RSAPGAASAAAA), 171-189 (GSSS…PGDK), and 207-219 (APVS…SSPG). A compositionally biased stretch (basic and acidic residues) spans 241 to 251 (ELDKKDQEPKP). The residue at position 252 (Ser252) is a Phosphoserine. 2 stretches are compositionally biased toward gly residues: residues 260–273 (RGGG…GGAE) and 341–352 (LVGGQLSGGLGL). The C2H2-type zinc-finger motif lies at 456-484 (HSCNWVAASGPCDKRFATSEELLSHLRTH). Position 580 is an omega-N-methylarginine (Arg580).

It belongs to the Elbow/Noc family. As to quaternary structure, interacts with TLE4; increases transcriptional repression. Interacts with DCAF7 and PHB2. May interact with HSPD1. As to expression, expressed in mammary epithelium.

The protein resides in the nucleus. The protein localises to the cytoplasm. Its function is as follows. Transcriptional corepressor which does not bind directly to DNA and may regulate transcription through recruitment of histone deacetylases to gene promoters. Regulates cell adhesion, migration and proliferation. May be required for segmental gene expression during hindbrain development. This chain is Zinc finger protein 703 (ZNF703), found in Homo sapiens (Human).